Here is a 622-residue protein sequence, read N- to C-terminus: Low affinity potassium transport system protein Kup (622 aa).

12 consecutive transmembrane segments (helical) span residues 9–29 (LPAI…TSPL), 49–69 (VFGF…IKYL), 103–123 (VIMG…TPAI), 137–157 (PQLD…LFMI), 165–185 (VGKL…GLGL), 213–233 (VSFI…ALYA), 247–267 (WFTV…ALLL), 276–296 (PFFL…AALA), 337–357 (IYIP…IVSF), 363–383 (LAAA…ILST), 396–416 (FVAL…TANL), and 419–439 (LLSG…VMTT).

It belongs to the HAK/KUP transporter (TC 2.A.72) family.

Its subcellular location is the cell inner membrane. It catalyses the reaction K(+)(in) + H(+)(in) = K(+)(out) + H(+)(out). In terms of biological role, responsible for the low-affinity transport of potassium into the cell. Likely operates as a K(+):H(+) symporter. The protein is Low affinity potassium transport system protein Kup of Escherichia coli O157:H7.